The chain runs to 286 residues: Phosphoribosylaminoimidazole-succinocarboxamide synthase (286 aa).

The protein belongs to the SAICAR synthetase family.

It carries out the reaction 5-amino-1-(5-phospho-D-ribosyl)imidazole-4-carboxylate + L-aspartate + ATP = (2S)-2-[5-amino-1-(5-phospho-beta-D-ribosyl)imidazole-4-carboxamido]succinate + ADP + phosphate + 2 H(+). It participates in purine metabolism; IMP biosynthesis via de novo pathway; 5-amino-1-(5-phospho-D-ribosyl)imidazole-4-carboxamide from 5-amino-1-(5-phospho-D-ribosyl)imidazole-4-carboxylate: step 1/2. This chain is Phosphoribosylaminoimidazole-succinocarboxamide synthase, found in Mannheimia succiniciproducens (strain KCTC 0769BP / MBEL55E).